Reading from the N-terminus, the 466-residue chain is MLPSTIQTLTLFLTSGGVLLSLYVSASLSYLLYSDILLKFSPTEITAPKVPLDCANASNVQAVNRSATKGMTLLLSEPEWTYPRLSCQGSTFQKALLISPHRFGESRGNSAPLIIREPFIACGPKECKHFALTHYAAQPGGYYNGTREDRNKLRHLISVKLGKIPTVENSIFHMAAWSGSACHDGREWTYIGVDGPDSNALIKIKYGEAYTDTYHSYANNILRTQESACNCIGGDCYLMITDGSASGISKCRFLKIREGRIIKEIFPTGRVEHTEECTCGFASNKTIECACRDNSYTAKRPFVKLNVETDTAEIRLMCTETYLDTPRPDDGSITGPCESNGDKGRGGIKGGFVHQRMASKIGRWYSRTMSKTERMGMELYVKYDGDPWTDSDALAPSGVMVSMKEPGWYSFGFEIKDKKCDVPCIGIEMVHDGGKKTWHSAATAIYCLMGSGQLLWDTVTGVDMAL.

At 1-8 (MLPSTIQT) the chain is on the intravirion side. A helical membrane pass occupies residues 9–31 (LTLFLTSGGVLLSLYVSASLSYL). The interval 13–35 (LTSGGVLLSLYVSASLSYLLYSD) is involved in apical transport and lipid raft association. Over 32 to 466 (LYSDILLKFS…DTVTGVDMAL (435 aa)) the chain is Virion surface. The interval 38–86 (LKFSPTEITAPKVPLDCANASNVQAVNRSATKGMTLLLSEPEWTYPRLS) is hypervariable stalk region. 2 N-linked (GlcNAc...) asparagine; by host glycosylation sites follow: N56 and N64. 8 disulfides stabilise this stretch: C87–C420, C122–C127, C182–C229, C231–C236, C277–C291, C279–C289, C318–C337, and C424–C447. Positions 89-466 (GSTFQKALLI…DTVTGVDMAL (378 aa)) are head of neuraminidase. A substrate-binding site is contributed by R116. N144 is a glycosylation site (N-linked (GlcNAc...) asparagine; by host). The active-site Proton donor/acceptor is the D149. Residue R150 participates in substrate binding. 275–276 (EE) contacts substrate. N-linked (GlcNAc...) asparagine; by host glycosylation occurs at N284. Position 292 (R292) interacts with substrate. Residues D293 and D324 each contribute to the Ca(2+) site. R374 contributes to the substrate binding site. Residue Y409 is the Nucleophile of the active site.

This sequence belongs to the glycosyl hydrolase 34 family. Homotetramer. Ca(2+) serves as cofactor. N-glycosylated.

It is found in the virion membrane. The protein localises to the host apical cell membrane. The catalysed reaction is Hydrolysis of alpha-(2-&gt;3)-, alpha-(2-&gt;6)-, alpha-(2-&gt;8)- glycosidic linkages of terminal sialic acid residues in oligosaccharides, glycoproteins, glycolipids, colominic acid and synthetic substrates.. With respect to regulation, inhibited by the neuraminidase inhibitors zanamivir (Relenza) and oseltamivir (Tamiflu). These drugs interfere with the release of progeny virus from infected cells and are effective against all influenza strains. Resistance to neuraminidase inhibitors is quite rare. Catalyzes the removal of terminal sialic acid residues from viral and cellular glycoconjugates. Cleaves off the terminal sialic acids on the glycosylated HA during virus budding to facilitate virus release. Additionally helps virus spread through the circulation by further removing sialic acids from the cell surface. These cleavages prevent self-aggregation and ensure the efficient spread of the progeny virus from cell to cell. Otherwise, infection would be limited to one round of replication. Described as a receptor-destroying enzyme because it cleaves a terminal sialic acid from the cellular receptors. May facilitate viral invasion of the upper airways by cleaving the sialic acid moieties on the mucin of the airway epithelial cells. Likely to plays a role in the budding process through its association with lipid rafts during intracellular transport. May additionally display a raft-association independent effect on budding. Plays a role in the determination of host range restriction on replication and virulence. Sialidase activity in late endosome/lysosome traffic seems to enhance virus replication. This is Neuraminidase from Homo sapiens (Human).